A 526-amino-acid chain; its full sequence is Putative ankyrin repeat protein R840 (526 aa).

ANK repeat units follow at residues 78 to 107 (TLNE…NIRS), 108 to 137 (RDNF…DIRS), 139 to 167 (KNYA…NIRD), 169 to 197 (DNCA…DSTS), 198 to 227 (NFNE…RCRN), 229 to 255 (SAII…NIRI), 256 to 285 (DDDY…NIRS), 286 to 315 (EIDH…DIKS), 317 to 345 (YDRS…NIRN), 346 to 375 (INDY…NIRV), 376 to 405 (DNDS…DIRV), 406 to 435 (NNYQ…NVSI), 437 to 467 (NVPL…DINL), 468 to 497 (ADDM…NVRA), and 499 to 526 (NDYA…AILS).

The chain is Putative ankyrin repeat protein R840 from Acanthamoeba polyphaga (Amoeba).